A 74-amino-acid chain; its full sequence is Sodium channel neurotoxin MeuNaTxalpha-11 (74 aa).

The N-terminal stretch at 1–7 (LMTGVES) is a signal peptide. Positions 9–73 (RDAYIAKPHN…VPIRIPGKCH (65 aa)) constitute an LCN-type CS-alpha/beta domain. 4 disulfide bridges follow: Cys19-Cys72, Cys23-Cys45, Cys31-Cys55, and Cys35-Cys57. Position 74 (Arg74) is a propeptide, removed by a carboxypeptidase.

This sequence belongs to the long (4 C-C) scorpion toxin superfamily. Sodium channel inhibitor family. Alpha subfamily. Expressed by the venom gland.

The protein resides in the secreted. Functionally, alpha toxins bind voltage-independently at site-3 of sodium channels (Nav) and inhibit the inactivation of the activated channels, thereby blocking neuronal transmission. The polypeptide is Sodium channel neurotoxin MeuNaTxalpha-11 (Mesobuthus eupeus (Lesser Asian scorpion)).